We begin with the raw amino-acid sequence, 167 residues long: 6,7-dimethyl-8-ribityllumazine synthase (167 aa).

Residues F26, 60–62 (AFE), and 89–91 (AII) contribute to the 5-amino-6-(D-ribitylamino)uracil site. Position 94–95 (94–95 (ET)) interacts with (2S)-2-hydroxy-3-oxobutyl phosphate. H97 (proton donor) is an active-site residue. F122 is a 5-amino-6-(D-ribitylamino)uracil binding site. A (2S)-2-hydroxy-3-oxobutyl phosphate-binding site is contributed by R136.

It belongs to the DMRL synthase family. In terms of assembly, forms an icosahedral capsid composed of 60 subunits, arranged as a dodecamer of pentamers.

It catalyses the reaction (2S)-2-hydroxy-3-oxobutyl phosphate + 5-amino-6-(D-ribitylamino)uracil = 6,7-dimethyl-8-(1-D-ribityl)lumazine + phosphate + 2 H2O + H(+). It participates in cofactor biosynthesis; riboflavin biosynthesis; riboflavin from 2-hydroxy-3-oxobutyl phosphate and 5-amino-6-(D-ribitylamino)uracil: step 1/2. Catalyzes the formation of 6,7-dimethyl-8-ribityllumazine by condensation of 5-amino-6-(D-ribitylamino)uracil with 3,4-dihydroxy-2-butanone 4-phosphate. This is the penultimate step in the biosynthesis of riboflavin. The protein is 6,7-dimethyl-8-ribityllumazine synthase of Ruthia magnifica subsp. Calyptogena magnifica.